We begin with the raw amino-acid sequence, 524 residues long: Acetyl-CoA decarbonylase/synthase complex subunit beta (524 aa).

Positions 212, 215, 301, and 303 each coordinate [Ni-Fe-S] cluster. Residues 436–466 form a disordered region; the sequence is WVEEEEEEAEEVAEEAAAEAAPAAQPAQAAQ. Over residues 437 to 452 the composition is skewed to acidic residues; the sequence is VEEEEEEAEEVAEEAA. The span at 453 to 466 shows a compositional bias: low complexity; sequence AEAAPAAQPAQAAQ.

This sequence belongs to the CdhC family. Monomer. The ACDS complex is made up of alpha, epsilon, beta, gamma and delta chains with a probable stoichiometry of (alpha(2)epsilon(2))(4)-beta(8)-(gamma(1)delta(1))(8). Requires [Ni-Fe-S] cluster as cofactor.

It carries out the reaction Co(I)-[corrinoid Fe-S protein] + acetyl-CoA + H(+) = methyl-Co(III)-[corrinoid Fe-S protein] + CO + CoA. In terms of biological role, part of a complex that catalyzes the reversible cleavage of acetyl-CoA, allowing autotrophic growth from CO(2). The alpha-epsilon complex generates CO from CO(2), while the beta subunit (this protein) combines the CO with CoA and a methyl group to form acetyl-CoA. The methyl group, which is incorporated into acetyl-CoA, is transferred to the beta subunit by a corrinoid iron-sulfur protein (the gamma-delta complex). This chain is Acetyl-CoA decarbonylase/synthase complex subunit beta, found in Archaeoglobus fulgidus (strain ATCC 49558 / DSM 4304 / JCM 9628 / NBRC 100126 / VC-16).